A 627-amino-acid polypeptide reads, in one-letter code: (-)-alpha-pinene synthase 1, chloroplastic (627 aa).

The N-terminal 36 residues, M1–L36, are a transit peptide targeting the chloroplast. Positions 378, 382, and 530 each coordinate Mg(2+). A DDXXD motif motif is present at residues D378–D382.

This sequence belongs to the terpene synthase family. Tpsd subfamily. Mg(2+) is required as a cofactor. Requires Mn(2+) as cofactor.

It is found in the plastid. It localises to the chloroplast. It carries out the reaction (2E)-geranyl diphosphate = (1S,5S)-beta-pinene + diphosphate. The catalysed reaction is (2E)-geranyl diphosphate = (1S,5S)-alpha-pinene + diphosphate. The protein operates within terpene metabolism; oleoresin biosynthesis. In terms of biological role, terpene synthase (TPS) involved in the biosynthesis of monoterpene natural products included in conifer oleoresin secretions and volatile emissions; these compounds contribute to biotic and abiotic stress defense against herbivores and pathogens. Catalyzes the conversion of (2E)-geranyl diphosphate (GPP) to (1S,5S)-beta-pinene. This Picea sitchensis (Sitka spruce) protein is (-)-alpha-pinene synthase 1, chloroplastic.